The chain runs to 169 residues: T-cell receptor gamma chain C region DFL12 (169 aa).

A c region region spans residues 1–136 (PSDKRLDADI…LQFMSTSAYY (136 aa)). The chain crosses the membrane as a helical span at residues 137-157 (TYLLLLLKSVIYLAIISFSLL). The Cytoplasmic portion of the chain corresponds to 158–169 (RRTSVCCNEKRS).

It is found in the membrane. In Mus musculus (Mouse), this protein is T-cell receptor gamma chain C region DFL12.